A 128-amino-acid polypeptide reads, in one-letter code: 3-aminoacrylate deaminase RutC (128 aa).

This sequence belongs to the RutC family. In terms of assembly, homotrimer.

It carries out the reaction (Z)-3-aminoacrylate + H2O + H(+) = 3-oxopropanoate + NH4(+). Functionally, involved in pyrimidine catabolism. Catalyzes the deamination of 3-aminoacrylate to malonic semialdehyde, a reaction that can also occur spontaneously. RutC may facilitate the reaction and modulate the metabolic fitness, rather than catalyzing essential functions. The polypeptide is 3-aminoacrylate deaminase RutC (Escherichia coli O157:H7).